The following is a 173-amino-acid chain: Crossover junction endodeoxyribonuclease RuvC (173 aa).

Active-site residues include Asp8, Glu67, and Asp139. Positions 8, 67, and 139 each coordinate Mg(2+).

It belongs to the RuvC family. As to quaternary structure, homodimer which binds Holliday junction (HJ) DNA. The HJ becomes 2-fold symmetrical on binding to RuvC with unstacked arms; it has a different conformation from HJ DNA in complex with RuvA. In the full resolvosome a probable DNA-RuvA(4)-RuvB(12)-RuvC(2) complex forms which resolves the HJ. Mg(2+) is required as a cofactor.

The protein resides in the cytoplasm. The enzyme catalyses Endonucleolytic cleavage at a junction such as a reciprocal single-stranded crossover between two homologous DNA duplexes (Holliday junction).. Functionally, the RuvA-RuvB-RuvC complex processes Holliday junction (HJ) DNA during genetic recombination and DNA repair. Endonuclease that resolves HJ intermediates. Cleaves cruciform DNA by making single-stranded nicks across the HJ at symmetrical positions within the homologous arms, yielding a 5'-phosphate and a 3'-hydroxyl group; requires a central core of homology in the junction. The consensus cleavage sequence is 5'-(A/T)TT(C/G)-3'. Cleavage occurs on the 3'-side of the TT dinucleotide at the point of strand exchange. HJ branch migration catalyzed by RuvA-RuvB allows RuvC to scan DNA until it finds its consensus sequence, where it cleaves and resolves the cruciform DNA. The polypeptide is Crossover junction endodeoxyribonuclease RuvC (Photorhabdus laumondii subsp. laumondii (strain DSM 15139 / CIP 105565 / TT01) (Photorhabdus luminescens subsp. laumondii)).